The chain runs to 253 residues: MAGHSKWANIKHKKAKEDRKRGKLFSKLSKMITVAAREGGGDPEMNPDLRLAIQKAKDNNMPNDNIERAIKRGTGELEGVKYEKFVYEGYGPGGVALYLELMSDNRNRTAAEIRHVLSKNGGNLGESGCVSWMFKRRGQLIVDLNESDFDEDELMLEALEAGAEDVVTEDNLLTIYTDPSDFEEVRKQLEEQGIKFSSADIAMVPENNVNVDDKSTAKKVLKLMDALEDHDDVQEVYSNFDIPDEIMEEITEE.

The disordered stretch occupies residues 1–21 (MAGHSKWANIKHKKAKEDRKR).

Belongs to the TACO1 family.

The protein localises to the cytoplasm. In Halothermothrix orenii (strain H 168 / OCM 544 / DSM 9562), this protein is Probable transcriptional regulatory protein Hore_12350.